We begin with the raw amino-acid sequence, 423 residues long: Zinc finger protein Gfi-1 (423 aa).

An SNAG domain region spans residues Met-1–Ser-20. The interval Met-1–Cys-76 is disordered. Phosphoserine is present on residues Ser-20 and Ser-57. The segment covering Ser-48–Ser-57 has biased composition (basic and acidic residues). Residues Arg-141–Cys-258 are required for interaction with RELA. C2H2-type zinc fingers lie at residues Tyr-256 to His-279, Phe-285 to His-307, Phe-313 to His-335, Tyr-341 to His-363, His-369 to His-391, and Phe-397 to His-420.

As to quaternary structure, interacts (via the zinc-finger domain) with ARIH2; the interaction prevents GFI1 ubiquitination and proteasomal degradation. Forms a complex with EHMT2 and HDAC1 to promote 'Lys-9' dimethylation of H3 (H3K9Me2) and repress expression of target genes. Interacts directly with EHMT2. Interacts with RUNX1T1; the interaction represses HDAC-mediated transcriptional activity. Interacts (via the C-terminal zinc fingers) with ZBTB17; the interaction results in the recruitment of GFI1 to the CDKN1A/p21 and CDKNIB promoters and repression of transcription. Interacts with U2AF1L4. Component of RCOR-GFI-KDM1A-HDAC complexes. Interacts directly with RCOR1, KDM1A and HDAC2. Also interacts with HDAC1. Component of the GFI1-AJUBA-HDAC1 repressor complex. Interacts directly with AJUBA (via its LIM domains); the interaction results in the HDAC-dependent corepression of a subset of GFI1 target genes and, occurs independently of the SNAG domain. Interacts with SPI1; the interaction inhibits SPI1 transcriptional activity targeted at macrophage-specific genes, repressing macrophage differentiation of myeloid progenitor cells and promoting granulocyte commitment. Interacts with PIAS3; the interaction relieves the inhibitory effect of PIAS3 on STAT3-mediated transcriptional activity. Interacts with RELA; the interaction occurs on liposaccharide (LPS) stimulation and controls RELA DNA binding activity and regulates endotoxin-mediated TOLL-like receptor inflammatory response. Ubiquitinated.

It localises to the nucleus. Transcription repressor essential for hematopoiesis. Functions in a cell-context and development-specific manner. Binds to 5'-TAAATCAC[AT]GCA-3' in the promoter region of a large number of genes. Component of several complexes, including the EHMT2-GFI1-HDAC1, AJUBA-GFI1-HDAC1 and RCOR-GFI-KDM1A-HDAC complexes, that suppress, via histone deacetylase (HDAC) recruitment, a number of genes implicated in multilineage blood cell development. Regulates neutrophil differentiation, promotes proliferation of lymphoid cells, and is required for granulocyte development. Inhibits SPI1 transcriptional activity at macrophage-specific genes, repressing macrophage differentiation of myeloid progenitor cells and promoting granulocyte commitment. Mediates, together with U2AF1L4, the alternative splicing of CD45 and controls T-cell receptor signaling. Regulates the endotoxin-mediated Toll-like receptor (TLR) inflammatory response by antagonizing RELA. Cooperates with CBFA2T2 to regulate ITGB1-dependent neurite growth. Controls cell-cycle progression by repressing CDKNIA/p21 transcription in response to TGFB1 via recruitment of GFI1 by ZBTB17 to the CDKNIA/p21 and CDKNIB promoters. Required for the maintenance of inner ear hair cells. In addition to its role in transcription, acts as a substrate adapter for PRMT1 in the DNA damage response. Facilitates the recognition of TP53BP1 and MRE11 substrates by PRMT1, promoting their methylation and the DNA damage response. The chain is Zinc finger protein Gfi-1 (Gfi1) from Mus musculus (Mouse).